We begin with the raw amino-acid sequence, 150 residues long: Monooxygenase dmxR10 (150 aa).

This sequence belongs to the avfA family.

Its pathway is secondary metabolite biosynthesis. Its function is as follows. Monooxygenase; part of the gene cluster that mediates the biosynthesis of the dimeric xanthones cryptosporioptides. The pathway begins with the synthesis of atrochrysone thioester by the polyketide synthase dmx-nrPKS. The atrochrysone carboxyl ACP thioesterase dmxR1 then breaks the thioester bond and releases the atrochrysone carboxylic acid from dmx-nrPKS. Atrochrysone carboxylic acid is decarboxylated by the decarboxylase dmxR15, and oxidized by the anthrone oxygenase dmxR16 to yield emodin. Emodin is then reduced to emodin hydroquinone by the oxidoreductase dmxR7. A-ring reduction by the short chain dehydrogenase dmxR18, dehydration by the scytalone dehydratase-like protein dmxR17 and probable spontaneous re-oxidation, results in overall deoxygenation to chrysophanol. Baeyer-Villiger oxidation by the Baeyer-Villiger monooxygenase (BVMO) dmxR6 then yields monodictylactone in equilibrium with monodictyphenone. In the case of the cryptosporioptides biosynthesis, monodictylactone is reduced at C-12 to an alcohol (by the short chain dehydrogenases dmxR12 or dmxR8) and hydroxylated at C-5 by dmxR9, yielding the electron-rich aromatic which could eliminate H(2)O to form the ortho-quinonemethide, followed by tautomerisation to paraquinone and complete the formal reduction to produce the 10-methylgroup. Conjugate addition of C-4a-OH to the resulting paraquinone by the monooxygenase dmxR10 then gives cyclohexadienone, which is then reduced at C-5 by the short chain dehydrogenase dmxR3 to give the dihydroxanthone. The 6,7-epoxide in the cryptosporioptides could be introduced by the cytochrome P450 monooxygenase dmxL3. The highly reducing PKS dmxL2 manufactures butyrate, which is further carboxylated by dmxL1 to form ethylmalonate. It is not yet clear whether the carboxylation occurs while the butyrate is attached to the ACP of dmxL2, but this unusual fungal metabolite could then be esterified to O-5 by the O-acetyltransferase dmxR13. Finally, dimerization performed by dmxR5 gives the observed dimers cryptosporioptides A, B and C as the final products of the pathway. The protein is Monooxygenase dmxR10 of Cryptosporiopsis sp. (strain 8999).